Consider the following 180-residue polypeptide: Signal peptidase complex subunit 2 (180 aa).

Residues 1-45 (MSDERITVVNKWDGPTVKNGLDEVVKKILNDKVGWTEQHNLMNLR) are Cytoplasmic-facing. A helical membrane pass occupies residues 46-66 (LLISFIGVAFSAFACGYDFYA). The Lumenal portion of the chain corresponds to 67–72 (PFPKSK). Residues 73-93 (IVLLVCSVSYFICMGVLQLFQ) form a helical membrane-spanning segment. Residues 94-180 (WYVEKDCFYE…LWARLIRSEQ (87 aa)) lie on the Cytoplasmic side of the membrane.

It belongs to the SPCS2 family. Component of the signal peptidase complex (SPC) composed of a catalytic subunit sec-11 and three accessory subunits spcs-1, spcs-2 and spcs-3. The complex induces a local thinning of the ER membrane which is used to measure the length of the signal peptide (SP) h-region of protein substrates. This ensures the selectivity of the complex towards h-regions shorter than 18-20 amino acids.

The protein resides in the endoplasmic reticulum membrane. Its function is as follows. Component of the signal peptidase complex (SPC) which catalyzes the cleavage of N-terminal signal sequences from nascent proteins as they are translocated into the lumen of the endoplasmic reticulum. Enhances the enzymatic activity of SPC and facilitates the interactions between different components of the translocation site. The chain is Signal peptidase complex subunit 2 from Caenorhabditis briggsae.